The primary structure comprises 295 residues: Hepatic leukemia factor (295 aa).

Residues 37–52 (EDAFSKDKDKEKKLDD) are compositionally biased toward basic and acidic residues. Disordered stretches follow at residues 37-70 (EDAF…PTLW) and 93-167 (SENG…IDPD). Residues 225–288 (DDKYWARRRK…GKCKNILAKY (64 aa)) enclose the bZIP domain. Residues 227-247 (KYWARRRKNNMAAKRSRDARR) form a basic motif region. The interval 248–255 (LKENQIAI) is leucine-zipper.

The protein belongs to the bZIP family. PAR subfamily. As to quaternary structure, binds DNA specifically as homodimer or heterodimer with other PAR factors. Highly expressed in liver; lower levels in lung and kidney.

It is found in the nucleus. This Homo sapiens (Human) protein is Hepatic leukemia factor (HLF).